Reading from the N-terminus, the 1537-residue chain is Flocculation protein FLO1 (1537 aa).

The signal sequence occupies residues 1 to 24 (MTMPHRYMFLAVFTLLALTSVASG). The region spanning 74-249 (GGQTDISIDY…GTTVSDDFEG (176 aa)) is the PA14 domain. N-linked (GlcNAc...) asparagine glycans are attached at residues N135 and N187. The sugar recognition stretch occupies residues 197–240 (GGSLPPNIEGTVYMYAGYYYPMKVVYSNAVSWGTLPISVTLPDG). A glycan (N-linked (GlcNAc...) asparagine) is linked at N262. 18 consecutive repeat copies span residues 278–322 (TTTE…STII), 323–367 (TTTE…TTAI), 368–412 (TTTE…TTAM), 413–457 (TTTQ…TTAM), 458–502 (TTTQ…TTAM), 503–547 (TTTQ…TTAM), 548–592 (TTPQ…TTAI), 593–637 (TTTE…TTAI), 638–682 (TTTQ…TTAM), 683–727 (TTTQ…TTAM), 728–772 (TTTQ…GLIS), 773–817 (TTTE…GLVT), 818–862 (TTTE…GLIS), 863–907 (TTTE…GLIS), 908–952 (TTTE…GLIS), 953–997 (TTTE…GLIS), 998–1042 (TTTE…GLVT), and 1043–1087 (TTTE…ISSS). Residues 278 to 1087 (TTTEPWTGTF…KTPTTAISSS (810 aa)) form an 18 X 45 AA approximate tandem repeats, Thr-rich region. 10 N-linked (GlcNAc...) asparagine glycosylation sites follow: N329, N374, N419, N464, N509, N554, N599, N644, N689, and N734. Disordered regions lie at residues 770 to 799 (LIST…NGQP) and 860 to 889 (LIST…NGQP). Over residues 773-795 (TTTEPWTGTFTSTSTEMTTVTGT) the composition is skewed to low complexity. The span at 863 to 885 (TTTEPWTGTFTSTSTEMTTITGT) shows a compositional bias: low complexity. Residues 995 to 1024 (LISTTTEPWTGTFTSTSTEMTTVTGTNGQP) are disordered. The segment covering 998–1020 (TTTEPWTGTFTSTSTEMTTVTGT) has biased composition (low complexity). Residue N1114 is glycosylated (N-linked (GlcNAc...) asparagine). A run of 2 repeats spans residues 1118–1137 (VISS…TSSP) and 1138–1157 (VISS…IFSE). Residues 1118–1157 (VISSSVISSSVTSSLFTSSPVISSSVISSSTTTSTSIFSE) form a 2 X 20 AA approximate tandem repeats, Ser/Thr-rich region. Over residues 1161–1220 (SSVIPTSSSTSGSSESETSSAGSVSSSSFISSESSKSPTYSSSSLPLVTSATTSQETASS) the composition is skewed to low complexity. The tract at residues 1161–1232 (SSVIPTSSST…PATTTKTSEQ (72 aa)) is disordered. A compositionally biased stretch (polar residues) spans 1222 to 1232 (PPATTTKTSEQ). 6 consecutive repeat copies span residues 1226 to 1276 (TTKT…CPIS), 1291 to 1341 (TTET…CPIS), 1342 to 1392 (TTES…RPQT), 1408 to 1416 (ETTTNTLAA), 1417 to 1425 (ETTTNTVAA), and 1426 to 1434 (ETITNTGAA). The interval 1226–1392 (TTKTSEQTTL…TVYPTWRPQT (167 aa)) is 3 X 51 AA approximate repeats, Ser/Thr-rich. A compositionally biased stretch (polar residues) spans 1392-1404 (TANEESVSSKMNS). Residues 1392-1414 (TANEESVSSKMNSATGETTTNTL) are disordered. Positions 1405 to 1414 (ATGETTTNTL) are enriched in low complexity. The segment at 1408–1434 (ETTTNTLAAETTTNTVAAETITNTGAA) is 3 X 9 AA approximate tandem repeats, Thr-rich. A disordered region spans residues 1468–1497 (VSVSETGNTKSLTSSGLSTMSQQPRSTPAS). The span at 1472-1497 (ETGNTKSLTSSGLSTMSQQPRSTPAS) shows a compositional bias: polar residues. Residue G1514 is the site of GPI-anchor amidated glycine attachment. Residues 1515–1537 (SANSLLAGSGLSVFIASLLLAII) constitute a propeptide, removed in mature form.

Belongs to the flocculin family. In terms of processing, extensively N- and O-glycosylated. The GPI-anchor is attached to the protein in the endoplasmic reticulum and serves to target the protein to the cell surface. There, the glucosamine-inositol phospholipid moiety is cleaved off and the GPI-modified mannoprotein is covalently attached via its lipidless GPI glycan remnant to the 1,6-beta-glucan of the outer cell wall layer.

The protein resides in the cell membrane. It is found in the secreted. Its subcellular location is the cell wall. Cell wall protein that participates directly in adhesive cell-cell interactions during yeast flocculation, a reversible, asexual and Ca(2+)-dependent process in which cells adhere to form aggregates (flocs) consisting of thousands of cells. The lectin-like protein sticks out of the cell wall of flocculent cells and selectively binds mannose residues in the cell walls of adjacent cells. Activity is inhibited by mannose, but not by glucose, maltose, sucrose or galactose. Also involved in cell-substrate adhesion. This Saccharomyces cerevisiae (strain ATCC 204508 / S288c) (Baker's yeast) protein is Flocculation protein FLO1 (FLO1).